A 208-amino-acid polypeptide reads, in one-letter code: ATP-dependent Clp protease proteolytic subunit (208 aa).

Catalysis depends on Ser-98, which acts as the Nucleophile. His-123 is an active-site residue.

Belongs to the peptidase S14 family. In terms of assembly, fourteen ClpP subunits assemble into 2 heptameric rings which stack back to back to give a disk-like structure with a central cavity, resembling the structure of eukaryotic proteasomes.

The protein localises to the cytoplasm. The catalysed reaction is Hydrolysis of proteins to small peptides in the presence of ATP and magnesium. alpha-casein is the usual test substrate. In the absence of ATP, only oligopeptides shorter than five residues are hydrolyzed (such as succinyl-Leu-Tyr-|-NHMec, and Leu-Tyr-Leu-|-Tyr-Trp, in which cleavage of the -Tyr-|-Leu- and -Tyr-|-Trp bonds also occurs).. In terms of biological role, cleaves peptides in various proteins in a process that requires ATP hydrolysis. Has a chymotrypsin-like activity. Plays a major role in the degradation of misfolded proteins. The chain is ATP-dependent Clp protease proteolytic subunit from Wolbachia sp. subsp. Brugia malayi (strain TRS).